The chain runs to 193 residues: LOB domain-containing protein 12 (193 aa).

Residues 7–108 (SPCASCKLLR…MQLAVAQAEI (102 aa)) form the LOB domain.

Belongs to the LOB domain-containing protein family. In terms of tissue distribution, expressed predominantly in roots, and at low levels in shoots, floral stems and open flowers.

In Arabidopsis thaliana (Mouse-ear cress), this protein is LOB domain-containing protein 12 (LBD12).